We begin with the raw amino-acid sequence, 382 residues long: Chaperone protein DnaJ (382 aa).

One can recognise a J domain in the interval 5–70 (DYYEVLGLQK…QKRAAYDQYG (66 aa)). The CR-type zinc-finger motif lies at 134 to 212 (GTTKDIQINT…CHGEGRVHKK (79 aa)). Positions 147, 150, 164, 167, 186, 189, 200, and 203 each coordinate Zn(2+). 4 CXXCXGXG motif repeats span residues 147-154 (CDSCGGSG), 164-171 (CPHCHGSG), 186-193 (CPTCHGSG), and 200-207 (CRNCHGEG).

The protein belongs to the DnaJ family. As to quaternary structure, homodimer. Requires Zn(2+) as cofactor.

It localises to the cytoplasm. Participates actively in the response to hyperosmotic and heat shock by preventing the aggregation of stress-denatured proteins and by disaggregating proteins, also in an autonomous, DnaK-independent fashion. Unfolded proteins bind initially to DnaJ; upon interaction with the DnaJ-bound protein, DnaK hydrolyzes its bound ATP, resulting in the formation of a stable complex. GrpE releases ADP from DnaK; ATP binding to DnaK triggers the release of the substrate protein, thus completing the reaction cycle. Several rounds of ATP-dependent interactions between DnaJ, DnaK and GrpE are required for fully efficient folding. Also involved, together with DnaK and GrpE, in the DNA replication of plasmids through activation of initiation proteins. This is Chaperone protein DnaJ from Haemophilus influenzae (strain ATCC 51907 / DSM 11121 / KW20 / Rd).